The chain runs to 168 residues: Putative insulin-like growth factor 2 antisense gene protein (168 aa).

Disordered regions lie at residues 1 to 91 (MSKR…ERSN) and 108 to 168 (PLRR…RPGK). Composition is skewed to basic residues over residues 59-70 (AQRRRGSARRGA) and 159-168 (RWRQPGRPGK).

The polypeptide is Putative insulin-like growth factor 2 antisense gene protein (IGF2-AS) (Homo sapiens (Human)).